A 75-amino-acid polypeptide reads, in one-letter code: DNA-directed RNA polymerase subunit Rpo6 (75 aa).

The protein belongs to the archaeal Rpo6/eukaryotic RPB6 RNA polymerase subunit family. Part of the RNA polymerase complex.

The protein resides in the cytoplasm. The enzyme catalyses RNA(n) + a ribonucleoside 5'-triphosphate = RNA(n+1) + diphosphate. DNA-dependent RNA polymerase (RNAP) catalyzes the transcription of DNA into RNA using the four ribonucleoside triphosphates as substrates. In Archaeoglobus fulgidus (strain ATCC 49558 / DSM 4304 / JCM 9628 / NBRC 100126 / VC-16), this protein is DNA-directed RNA polymerase subunit Rpo6.